Reading from the N-terminus, the 338-residue chain is MVMMKKLLSNRLFNMSKTASQSLMNCRTSSSSSLAMRTRVPKDIGEATIDPEPGDLTISQRFLNKFSMNGIDTTSKMSIGESLMEKLKEMDMNKDRIRLDGLSHPKEETLGLTVQDVKKLLRAAEIEVIKTKLMETGKIWIRYSDFLGVCSDSSLDPSQGALIAKMLDDSGNVIVMGNSVCLRPHQLTKSIEGLLPLSQIHNPNDPRRKELNELEAIKTVIDQKAHSLVRRELWAGLGYLIIQTAGFMRLTFWDLTWDVMEPICFYVSSVYFMAGYTFFLKTSREPSFQGFYQSRFEAKQRKLMQSEDFDVGRYDELKKLFNPKPSGAVPKILGSLQN.

The N-terminal 36 residues, 1–36, are a transit peptide targeting the mitochondrion; that stretch reads MVMMKKLLSNRLFNMSKTASQSLMNCRTSSSSSLAM. A helical membrane pass occupies residues 233–253; that stretch reads LWAGLGYLIIQTAGFMRLTFW. The Selectivity filter motif lies at 257–265; that stretch reads WDVMEPICF. Residue Glu-261 participates in Ca(2+) binding. A helical transmembrane segment spans residues 263 to 280; the sequence is ICFYVSSVYFMAGYTFFL.

It belongs to the MCU (TC 1.A.77) family.

Its subcellular location is the mitochondrion inner membrane. The enzyme catalyses Ca(2+)(in) = Ca(2+)(out). Functionally, mitochondrial inner membrane calcium uniporter that mediates calcium uptake into mitochondria. Constitutes a pore-forming and calcium-conducting subunit. Mitochondrial calcium homeostasis plays key roles in cellular physiology and regulates cell bioenergetics, cytoplasmic calcium signals and activation of cell death pathways. The sequence is that of Calcium uniporter protein 4, mitochondrial from Arabidopsis thaliana (Mouse-ear cress).